The chain runs to 314 residues: Pseudouridine-5'-phosphate glycosidase (314 aa).

The active-site Proton donor is the glutamate 30. The substrate site is built by lysine 91 and valine 111. Mn(2+) is bound at residue aspartate 143. Position 145–147 (145–147 (SAD)) interacts with substrate. Lysine 164 serves as the catalytic Nucleophile.

The protein belongs to the pseudouridine-5'-phosphate glycosidase family. As to quaternary structure, homotrimer. Mn(2+) serves as cofactor.

It catalyses the reaction D-ribose 5-phosphate + uracil = psi-UMP + H2O. Catalyzes the reversible cleavage of pseudouridine 5'-phosphate (PsiMP) to ribose 5-phosphate and uracil. Functions biologically in the cleavage direction, as part of a pseudouridine degradation pathway. In Cupriavidus pinatubonensis (strain JMP 134 / LMG 1197) (Cupriavidus necator (strain JMP 134)), this protein is Pseudouridine-5'-phosphate glycosidase.